The sequence spans 188 residues: Peptidyl-tRNA hydrolase (188 aa).

TRNA is bound at residue tyrosine 14. The Proton acceptor role is filled by histidine 19. Positions 64, 66, and 112 each coordinate tRNA.

Belongs to the PTH family. As to quaternary structure, monomer.

The protein localises to the cytoplasm. It catalyses the reaction an N-acyl-L-alpha-aminoacyl-tRNA + H2O = an N-acyl-L-amino acid + a tRNA + H(+). Functionally, hydrolyzes ribosome-free peptidyl-tRNAs (with 1 or more amino acids incorporated), which drop off the ribosome during protein synthesis, or as a result of ribosome stalling. Its function is as follows. Catalyzes the release of premature peptidyl moieties from peptidyl-tRNA molecules trapped in stalled 50S ribosomal subunits, and thus maintains levels of free tRNAs and 50S ribosomes. This is Peptidyl-tRNA hydrolase from Clostridium novyi (strain NT).